Reading from the N-terminus, the 238-residue chain is Tetrahydromethanopterin S-methyltransferase subunit A 1 (238 aa).

Topologically, residues 2–218 are cytoplasmic; that stretch reads VEKKSPAEGW…RMFAGMYSGK (217 aa). H84 serves as a coordination point for 5-hydroxybenzimidazolylcob(I)amide. A helical transmembrane segment spans residues 219-237; sequence VQGIMIGLAFTLTLGILLL. A topological domain (extracellular) is located at residue V238.

It belongs to the MtrA family. As to quaternary structure, the complex is composed of 8 subunits; MtrA, MtrB, MtrC, MtrD, MtrE, MtrF, MtrG and MtrH. 5-hydroxybenzimidazolylcob(I)amide serves as cofactor.

It is found in the cell membrane. The catalysed reaction is 5-methyl-5,6,7,8-tetrahydromethanopterin + coenzyme M + 2 Na(+)(in) = 5,6,7,8-tetrahydromethanopterin + methyl-coenzyme M + 2 Na(+)(out). Its pathway is one-carbon metabolism; methanogenesis from CO(2); methyl-coenzyme M from 5,10-methylene-5,6,7,8-tetrahydromethanopterin: step 2/2. Functionally, part of a complex that catalyzes the formation of methyl-coenzyme M and tetrahydromethanopterin from coenzyme M and methyl-tetrahydromethanopterin. This is an energy-conserving, sodium-ion translocating step. In Methanothermobacter thermautotrophicus (strain ATCC 29096 / DSM 1053 / JCM 10044 / NBRC 100330 / Delta H) (Methanobacterium thermoautotrophicum), this protein is Tetrahydromethanopterin S-methyltransferase subunit A 1.